The chain runs to 283 residues: Acetylglutamate kinase (283 aa).

Residues 63 to 64 (GG), Arg-85, and Asn-178 contribute to the substrate site.

The protein belongs to the acetylglutamate kinase family. ArgB subfamily.

The protein localises to the cytoplasm. It catalyses the reaction N-acetyl-L-glutamate + ATP = N-acetyl-L-glutamyl 5-phosphate + ADP. Its pathway is amino-acid biosynthesis; L-arginine biosynthesis; N(2)-acetyl-L-ornithine from L-glutamate: step 2/4. Catalyzes the ATP-dependent phosphorylation of N-acetyl-L-glutamate. The sequence is that of Acetylglutamate kinase from Prochlorococcus marinus (strain AS9601).